The primary structure comprises 360 residues: BOLA class I histocompatibility antigen, alpha chain BL3-6 (360 aa).

An N-terminal signal peptide occupies residues 1 to 21; that stretch reads MGPRALLLLLSGVLILTETRA. The segment at 22-111 is alpha-1; the sequence is GSHSLRYFST…LRGYYNQSEA (90 aa). The Extracellular portion of the chain corresponds to 22 to 308; it reads GSHSLRYFST…QPSFLTMGII (287 aa). Residue N107 is glycosylated (N-linked (GlcNAc...) asparagine). The segment at 112-203 is alpha-2; that stretch reads GSHTLQWMSG…ENGKDTLLRA (92 aa). Cystine bridges form between C122-C185 and C224-C280. Residues 204-295 form an alpha-3 region; that stretch reads DPPKAHVTHH…GLQEPLTLRW (92 aa). Positions 206–292 constitute an Ig-like C1-type domain; the sequence is PKAHVTHHPI…QHEGLQEPLT (87 aa). A connecting peptide region spans residues 296-308; it reads EPPQPSFLTMGII. The chain crosses the membrane as a helical span at residues 309–328; sequence VGLVLLVVTGAVVAGVVICM. The Cytoplasmic portion of the chain corresponds to 329-360; sequence KKRSGEKGGNYIQASSSDSAQGSDVSLTVPKV. The tract at residues 340–360 is disordered; it reads IQASSSDSAQGSDVSLTVPKV. Low complexity predominate over residues 341-354; it reads QASSSDSAQGSDVS. S351 and S354 each carry phosphoserine.

It belongs to the MHC class I family. As to quaternary structure, heterodimer of an alpha chain and a beta chain (beta-2-microglobulin).

It localises to the membrane. In terms of biological role, involved in the presentation of foreign antigens to the immune system. The sequence is that of BOLA class I histocompatibility antigen, alpha chain BL3-6 from Bos taurus (Bovine).